A 160-amino-acid chain; its full sequence is 2-C-methyl-D-erythritol 2,4-cyclodiphosphate synthase (160 aa).

Positions 10 and 12 each coordinate a divalent metal cation. Residues 10-12 and 36-37 contribute to the 4-CDP-2-C-methyl-D-erythritol 2-phosphate site; these read DVH and HS. H44 serves as a coordination point for a divalent metal cation. Residues 58–60, 63–67, 102–108, 134–137, F141, and R144 each bind 4-CDP-2-C-methyl-D-erythritol 2-phosphate; these read DIG, FPDTD, AQAPKMA, and TTTE.

It belongs to the IspF family. Homotrimer. A divalent metal cation serves as cofactor.

The enzyme catalyses 4-CDP-2-C-methyl-D-erythritol 2-phosphate = 2-C-methyl-D-erythritol 2,4-cyclic diphosphate + CMP. It participates in isoprenoid biosynthesis; isopentenyl diphosphate biosynthesis via DXP pathway; isopentenyl diphosphate from 1-deoxy-D-xylulose 5-phosphate: step 4/6. In terms of biological role, involved in the biosynthesis of isopentenyl diphosphate (IPP) and dimethylallyl diphosphate (DMAPP), two major building blocks of isoprenoid compounds. Catalyzes the conversion of 4-diphosphocytidyl-2-C-methyl-D-erythritol 2-phosphate (CDP-ME2P) to 2-C-methyl-D-erythritol 2,4-cyclodiphosphate (ME-CPP) with a corresponding release of cytidine 5-monophosphate (CMP). The polypeptide is 2-C-methyl-D-erythritol 2,4-cyclodiphosphate synthase (Shewanella denitrificans (strain OS217 / ATCC BAA-1090 / DSM 15013)).